The chain runs to 1427 residues: Double-stranded DNA deaminase toxin A (1427 aa).

Transmembrane regions (helical) follow at residues 16–36 (ALAG…AVAF) and 43–63 (FGVA…LLSI). YD repeat units follow at residues 469-501 (RVVE…DGRT), 548-584 (YDDA…GPDG), 720-747 (NARG…GRLR), and 977-1008 (YDGA…ISRA). A C-terminal effector domain, has cytidine deaminase activity region spans residues 1264–1427 (IGLNGGANVY…SPKSPTKGGC (164 aa)). The Zn(2+) site is built by H1345, C1373, and C1376. A disordered region spans residues 1402–1427 (KRGATGETKVFTGNSNSPKSPTKGGC). The segment covering 1412–1421 (FTGNSNSPKS) has biased composition (polar residues).

Belongs to the RHS/WapA nuclease family. The toxic domain forms a 1:1 complex with the DddI immunity protein.

Its subcellular location is the membrane. It carries out the reaction a 2'-deoxycytidine in double-stranded DNA + H2O + H(+) = a 2'-deoxyuridine in double-stranded DNA + NH4(+). In terms of biological role, toxic component of a toxin-immunity protein module, which functions as a cellular contact-dependent growth inhibition (CDI) system. CDI modules allow bacteria to communicate with and inhibit the growth of closely related neighboring bacteria in a contact-dependent fashion. Bacteria that have this module inhibit or kill bacteria without it, giving them a growth advantage. Probably specifically inhibited by cognate immunity protein DddI. The C-terminal 163 residue fragment has double-stranded DNA cytidine deaminase activity; it does not deaminate ssDNA, ssRNA or dsRNA. Leads to C:G to T:A conversions in deaminated DNA. Preferentially deaminates 5'-TC-3' substrates. This chain is Double-stranded DNA deaminase toxin A, found in Burkholderia cenocepacia (strain H111).